The sequence spans 284 residues: Thymidylate synthase (284 aa).

Position 34 (Arg34) interacts with dUMP. Residue His64 coordinates (6R)-5,10-methylene-5,6,7,8-tetrahydrofolate. Residue 139–140 (RR) coordinates dUMP. Cys159 serves as the catalytic Nucleophile. DUMP contacts are provided by residues 186 to 189 (RSAD), Asn197, and 227 to 229 (HIY). Asp189 is a binding site for (6R)-5,10-methylene-5,6,7,8-tetrahydrofolate. Position 283 (Ala283) interacts with (6R)-5,10-methylene-5,6,7,8-tetrahydrofolate.

It belongs to the thymidylate synthase family. Bacterial-type ThyA subfamily. Homodimer.

Its subcellular location is the cytoplasm. The catalysed reaction is dUMP + (6R)-5,10-methylene-5,6,7,8-tetrahydrofolate = 7,8-dihydrofolate + dTMP. The protein operates within pyrimidine metabolism; dTTP biosynthesis. Catalyzes the reductive methylation of 2'-deoxyuridine-5'-monophosphate (dUMP) to 2'-deoxythymidine-5'-monophosphate (dTMP) while utilizing 5,10-methylenetetrahydrofolate (mTHF) as the methyl donor and reductant in the reaction, yielding dihydrofolate (DHF) as a by-product. This enzymatic reaction provides an intracellular de novo source of dTMP, an essential precursor for DNA biosynthesis. This Polaromonas sp. (strain JS666 / ATCC BAA-500) protein is Thymidylate synthase.